Consider the following 306-residue polypeptide: Ornithine carbamoyltransferase (306 aa).

Carbamoyl phosphate contacts are provided by residues 51–54 (STRT), Gln78, Arg102, and 129–132 (HPCQ). L-ornithine-binding positions include Asn160, Asp223, and 227-228 (SM). Residues 263–264 (CL) and Arg291 each bind carbamoyl phosphate.

Belongs to the aspartate/ornithine carbamoyltransferase superfamily. OTCase family.

It is found in the cytoplasm. The enzyme catalyses carbamoyl phosphate + L-ornithine = L-citrulline + phosphate + H(+). The protein operates within amino-acid biosynthesis; L-arginine biosynthesis; L-arginine from L-ornithine and carbamoyl phosphate: step 1/3. Its function is as follows. Reversibly catalyzes the transfer of the carbamoyl group from carbamoyl phosphate (CP) to the N(epsilon) atom of ornithine (ORN) to produce L-citrulline. This Trichormus variabilis (strain ATCC 29413 / PCC 7937) (Anabaena variabilis) protein is Ornithine carbamoyltransferase.